Reading from the N-terminus, the 259-residue chain is Phospholipase YtpA (259 aa).

The Nucleophile role is filled by Ser88. Catalysis depends on charge relay system residues Asp206 and His236.

The protein belongs to the AB hydrolase superfamily.

It participates in antibiotic biosynthesis; bacilysocin biosynthesis. Its function is as follows. Phospholipase involved in the biosynthesis of the antibiotic bacilysocin. It probably catalyzes the hydrolysis of the 2-sn-acyl moiety of phosphatidylglycerol to produce bacilysocin (lysophosphatidylglycerol). Is also able to catalyze the hydrolysis reaction of one acyl bond in phosphatidylcholine in vitro (actual cleavage point is unknown), resulting in lysophosphatidylcholine. In Bacillus subtilis (strain 168), this protein is Phospholipase YtpA (ytpA).